A 397-amino-acid chain; its full sequence is Cytochrome b (397 aa).

The next 4 helical transmembrane spans lie at 38 to 58, 82 to 104, 119 to 139, and 185 to 205; these read FGSL…FLAM, WLLR…LHIF, VWCL…IGYV, and FFSL…LHLA. Heme b contacts are provided by histidine 88 and histidine 102. Heme b contacts are provided by histidine 189 and histidine 203. A ubiquinone is bound at residue histidine 208. Helical transmembrane passes span 231–251, 295–315, 327–347, and 354–373; these read FYVK…IWIF, AGGV…PFFK, IYQG…WIGC, and FVTI…AITP.

Belongs to the cytochrome b family. As to quaternary structure, the main subunits of complex b-c1 are: cytochrome b, cytochrome c1 and the Rieske protein. It depends on heme b as a cofactor.

It localises to the mitochondrion inner membrane. Its function is as follows. Component of the ubiquinol-cytochrome c reductase complex (complex III or cytochrome b-c1 complex) that is part of the mitochondrial respiratory chain. The b-c1 complex mediates electron transfer from ubiquinol to cytochrome c. Contributes to the generation of a proton gradient across the mitochondrial membrane that is then used for ATP synthesis. This chain is Cytochrome b (MT-CYB), found in Oryza sativa subsp. indica (Rice).